The following is a 352-amino-acid chain: Maleylacetate reductase (352 aa).

NAD(+)-binding positions include 93–94 (GS) and 115–119 (TTYAG).

It belongs to the iron-containing alcohol dehydrogenase family. It depends on The maleylacetate reductase family of enzymes does not require any metal ion for activity, despite being related to the family III metal-dependent polyol dehydrogenases. as a cofactor.

It catalyses the reaction 3-oxoadipate + NAD(+) = maleylacetate + NADH + H(+). Its pathway is xenobiotic degradation; gamma-hexachlorocyclohexane degradation. Catalyzes the NADH-dependent reduction of maleylacetate to beta-ketoadipate, a step in the degradation of gamma-hexachlorocyclohexane (gamma-HCH or lindane). Has an essential role in this assimilation pathway that allows S.japonicum UT26 to grow on gamma-HCH as the sole source of carbon and energy. This Sphingobium indicum (strain DSM 16413 / CCM 7287 / MTCC 6362 / UT26 / NBRC 101211 / UT26S) (Sphingobium japonicum) protein is Maleylacetate reductase.